The sequence spans 472 residues: Fumarate hydratase class II (472 aa).

Positions 1–20 (MSPHENPSVETRTESDTFGP) are disordered. Substrate is bound by residues 105–107 (SGT), 136–139 (HPND), 146–148 (SSN), and threonine 194. The segment at 127–149 (GKRGGKSPVHPNDHCNRGQSSND) is disordered. The active-site Proton donor/acceptor is the histidine 195. Residue serine 325 is part of the active site. Residues serine 326 and 331–333 (KVN) contribute to the substrate site.

Belongs to the class-II fumarase/aspartase family. Fumarase subfamily. Homotetramer.

Its subcellular location is the cytoplasm. The enzyme catalyses (S)-malate = fumarate + H2O. It functions in the pathway carbohydrate metabolism; tricarboxylic acid cycle; (S)-malate from fumarate: step 1/1. Functionally, involved in the TCA cycle. Catalyzes the stereospecific interconversion of fumarate to L-malate. This chain is Fumarate hydratase class II, found in Methylorubrum extorquens (strain ATCC 14718 / DSM 1338 / JCM 2805 / NCIMB 9133 / AM1) (Methylobacterium extorquens).